Reading from the N-terminus, the 241-residue chain is Chaperone protein FimC (241 aa).

The signal sequence occupies residues 1-36 (MSNKNVNVRKSQEITFCLLAGILMFMAMVVAGRAEA).

It belongs to the periplasmic pilus chaperone family.

It is found in the periplasm. Its function is as follows. Required for the biogenesis of type 1 fimbriae. Binds and interact with FimH. This is Chaperone protein FimC (fimC) from Escherichia coli O6:H1 (strain CFT073 / ATCC 700928 / UPEC).